Consider the following 89-residue polypeptide: Acylphosphatase (89 aa).

One can recognise an Acylphosphatase-like domain in the interval 3–89; it reads QKHLQVFGTV…SEDFSDFKSI (87 aa). Catalysis depends on residues Arg18 and Asn36.

The protein belongs to the acylphosphatase family.

It carries out the reaction an acyl phosphate + H2O = a carboxylate + phosphate + H(+). In Staphylococcus haemolyticus (strain JCSC1435), this protein is Acylphosphatase (acyP).